The chain runs to 404 residues: p-hydroxybenzoate hydroxylase (404 aa).

Residues Glu35, 45–50 (RIRAGI), and Gln105 contribute to the FAD site. Substrate-binding positions include Tyr203, 214 to 216 (SMR), and Tyr224. Asp288 provides a ligand contact to FAD. Pro295 contributes to the substrate binding site. FAD is bound at residue 301–302 (LN).

The protein belongs to the aromatic-ring hydroxylase family. As to quaternary structure, homodimer. The cofactor is FAD.

The catalysed reaction is 4-hydroxybenzoate + NADPH + O2 + H(+) = 3,4-dihydroxybenzoate + NADP(+) + H2O. Its pathway is aromatic compound metabolism; benzoate degradation via hydroxylation; 3,4-dihydroxybenzoate from benzoate: step 2/2. Catalyzes the incorporation of an atom of dioxygen into p-hydroxybenzoate (p-OHB) to form 3,4-dihydroxybenzoate (3,4DOHB). The reaction occurs in two parts: reduction of the flavin adenine dinucleotide (FAD) in the enzyme by reduced nicotinamide adenine dinucleotide phosphate (NADPH) in response to binding p-hydroxybenzoate to the enzyme and oxidation of reduced FAD with oxygen to form a hydroperoxide, which then oxygenates p-hydroxybenzoate. This Acinetobacter baylyi (strain ATCC 33305 / BD413 / ADP1) protein is p-hydroxybenzoate hydroxylase (pobA).